We begin with the raw amino-acid sequence, 257 residues long: tRNA pseudouridine synthase A (257 aa).

D57 (nucleophile) is an active-site residue. Y115 contacts substrate.

This sequence belongs to the tRNA pseudouridine synthase TruA family. As to quaternary structure, homodimer.

It carries out the reaction uridine(38/39/40) in tRNA = pseudouridine(38/39/40) in tRNA. Its function is as follows. Formation of pseudouridine at positions 38, 39 and 40 in the anticodon stem and loop of transfer RNAs. The sequence is that of tRNA pseudouridine synthase A from Lawsonia intracellularis (strain PHE/MN1-00).